A 364-amino-acid polypeptide reads, in one-letter code: Dimethylsulfoniopropionate demethylase DmdA (364 aa).

Belongs to the GcvT family. DmdA subfamily.

It carries out the reaction S,S-dimethyl-beta-propiothetin + (6S)-5,6,7,8-tetrahydrofolate = 3-(methylsulfanyl)propanoate + (6S)-5-methyl-5,6,7,8-tetrahydrofolate + H(+). Its function is as follows. Involved in the assimilation of dimethylsulphoniopropionate (DMSP), an important compound in the fixation of carbon in marine phytoplankton, by mediating demethylation of dimethylsulfoniopropionate (DMSP) to methyl-mercaptopropionate (MMPA). The intracellular concentration of DMSP is estimated to be 70 mM. The protein is Dimethylsulfoniopropionate demethylase DmdA of Ruegeria pomeroyi (strain ATCC 700808 / DSM 15171 / DSS-3) (Silicibacter pomeroyi).